Reading from the N-terminus, the 364-residue chain is Protein leg1b (364 aa).

The N-terminal stretch at 1 to 22 is a signal peptide; that stretch reads MSEMGFLRSVAAVLLLAVFSHA. An N-linked (GlcNAc...) asparagine glycan is attached at Asn70.

Belongs to the LEG1 family. Detected in all tissues tested, with the highest levels in serum (at protein level). At mRNA level, only expressed in liver.

Its subcellular location is the secreted. Involved in early development of liver, exocrine pancreas and intestine, probably through cell cycle regulation. In liver, its function is partially redundant with leg1a function. The polypeptide is Protein leg1b (Danio rerio (Zebrafish)).